The sequence spans 2430 residues: Spatacsin (2430 aa).

Phosphoserine occurs at positions 1942 and 1943.

As to quaternary structure, interacts with AP5Z1, AP5B1, AP5S1 and ZFYVE26. As to expression, ubiquitously expressed at low level. Expressed in embryonic and adult cortical projection neurons.

It localises to the cytoplasm. Its subcellular location is the cytosol. The protein localises to the nucleus. The protein resides in the cell projection. It is found in the axon. It localises to the dendrite. Its subcellular location is the synapse. In terms of biological role, may play a role in neurite plasticity by maintaining cytoskeleton stability and regulating synaptic vesicle transport. This chain is Spatacsin (Spg11), found in Mus musculus (Mouse).